Here is a 1437-residue protein sequence, read N- to C-terminus: Protein SUPPRESSOR OF npr1-1, CONSTITUTIVE 1 (1437 aa).

An N-acetylmethionine modification is found at Met1. The TIR domain occupies 19-182 (RRYDVFPSFR…ELAEDVLRKT (164 aa)). 28-33 (RGEDVR) contacts NAD(+). Glu93 is a catalytic residue. LRR repeat units follow at residues 554 to 576 (MRNL…VYLP), 577 to 598 (LKLR…TFKA), 600 to 621 (YLVN…TLPL), 622 to 645 (GSLK…SLAI), 647 to 668 (LEEL…IQNA), 670 to 691 (KLIY…DLNL), 692 to 715 (ESLE…KMGC), 781 to 805 (LGSL…SKAT), 807 to 828 (LESL…IGNL), 829 to 851 (HRLV…DVNL), 852 to 875 (SSLE…STNI), 877 to 895 (WLYL…IGNL), 897 to 918 (RLVR…DVNL), 919 to 939 (SSLE…PLIS), 940 to 962 (ESIK…SKAT), 964 to 985 (LKNL…IGNL), 1009 to 1029 (SSLM…PLIS), 1030 to 1052 (TNIV…IGNL), 1054 to 1075 (RLVK…DVNL), 1076 to 1096 (SSLM…PLIS), 1097 to 1121 (TRIE…DFTR), 1123 to 1143 (TVLM…IFRL), and 1161 to 1185 (LSDA…NIEY).

The protein belongs to the disease resistance TIR-NB-LRR family. Homodimer. Interacts (via TIR domain) with TPR1. Interacts with EDS1. Interacts with SRFR1. Interacts with HSP90-3. Binds to MORC1/CRT1. Interacts with TRAF1B. Met-1 is specifically acetylated by N-terminal acetyltransferase complex A (NatA). The NatA-mediated acetylation serves as a degradation signal. Post-translationally, met-1 is specifically acetylated by N-terminal acetyltransferase complex B (NatB). The NatB-mediated acetylation stabilizes SNC1. In terms of tissue distribution, expressed in guard cells and epidermal cells, but not detected in mesophyll cells.

Its subcellular location is the cytoplasm. The protein resides in the microsome. It localises to the nucleus. The catalysed reaction is NAD(+) + H2O = ADP-D-ribose + nicotinamide + H(+). In terms of biological role, disease resistance protein of the TIR-NB-LRR-type. Part of the RPP5 locus that contains a cluster of several paralogous disease resistance (R) genes. Resistance proteins guard the plant against pathogens that contain an appropriate avirulence protein via an indirect interaction with this avirulence protein. That triggers a defense system including the hypersensitive response, which restricts the pathogen growth. Probably acts as a NAD(+) hydrolase (NADase): in response to activation, catalyzes cleavage of NAD(+) into ADP-D-ribose (ADPR) and nicotinamide; NAD(+) cleavage triggering a defense system that promotes cell death. Expression regulated by MOS1 at chromatin level. Nuclear localization of SNC1 is essential for its activity. ABA deficiency can rescue high-temperature inhibition of SNC1-mediated defense responses. The sequence is that of Protein SUPPRESSOR OF npr1-1, CONSTITUTIVE 1 from Arabidopsis thaliana (Mouse-ear cress).